A 503-amino-acid chain; its full sequence is Annexin A11 (503 aa).

Composition is skewed to pro residues over residues 1 to 17, 80 to 145, and 155 to 169; these read MSYP…PPAP, GYPP…PYPG, and SPVP…PSYP. Disordered stretches follow at residues 1-35 and 56-178; these read MSYP…MPPI and AANM…GTVT. Annexin repeat units follow at residues 198-269, 270-341, 353-425, and 429-500; these read FDPL…ALMK, TPIL…SLSQ, SLVQ…AVVK, and NTPA…KICG. N6-acetyllysine occurs at positions 246 and 253. At Lys477 the chain carries N6-acetyllysine.

This sequence belongs to the annexin family. Interacts with PDCD6 in a calcium-dependent manner. Interacts with KIF23 during cytokinesis. Interacts with S100A6.

It is found in the cytoplasm. It localises to the melanosome. Its subcellular location is the nucleus envelope. The protein resides in the nucleus. The protein localises to the nucleoplasm. It is found in the cytoskeleton. It localises to the spindle. In terms of biological role, required for midbody formation and completion of the terminal phase of cytokinesis. Binds specifically to calcyclin in a calcium-dependent manner. This Oryctolagus cuniculus (Rabbit) protein is Annexin A11 (ANXA11).